We begin with the raw amino-acid sequence, 391 residues long: 8-amino-7-oxononanoate synthase (391 aa).

A substrate-binding site is contributed by arginine 19. 106–107 (GY) lines the pyridoxal 5'-phosphate pocket. Residue histidine 131 participates in substrate binding. Pyridoxal 5'-phosphate is bound by residues serine 178, histidine 206, and threonine 234. Lysine 237 is modified (N6-(pyridoxal phosphate)lysine). Threonine 353 contributes to the substrate binding site.

Belongs to the class-II pyridoxal-phosphate-dependent aminotransferase family. BioF subfamily. Homodimer. It depends on pyridoxal 5'-phosphate as a cofactor.

It catalyses the reaction 6-carboxyhexanoyl-[ACP] + L-alanine + H(+) = (8S)-8-amino-7-oxononanoate + holo-[ACP] + CO2. Its pathway is cofactor biosynthesis; biotin biosynthesis. Its function is as follows. Catalyzes the decarboxylative condensation of pimeloyl-[acyl-carrier protein] and L-alanine to produce 8-amino-7-oxononanoate (AON), [acyl-carrier protein], and carbon dioxide. This Geobacter metallireducens (strain ATCC 53774 / DSM 7210 / GS-15) protein is 8-amino-7-oxononanoate synthase.